We begin with the raw amino-acid sequence, 87 residues long: uncharacterized protein (87 aa).

The signal sequence occupies residues 1–22 (MKIKTTVAALSVLSVLSFGAFA).

It belongs to the BhsA/McbA family.

It is found in the periplasm. This is an uncharacterized protein from Escherichia coli O6:H1 (strain CFT073 / ATCC 700928 / UPEC).